Reading from the N-terminus, the 303-residue chain is Holdfast attachment protein D (303 aa).

A compositionally biased stretch (polar residues) spans 266-281; it reads SARSTMSGPKSCSTTF. The interval 266–303 is disordered; it reads SARSTMSGPKSCSTTFRPIRAAASRRPPASAGTRAMTR. The span at 282–303 shows a compositional bias: low complexity; sequence RPIRAAASRRPPASAGTRAMTR.

The protein localises to the cell outer membrane. Functionally, involved in attachment of the holdfast to the cell. The holdfast is a structure that allows the bacteria to firmly adhere to surfaces. This is Holdfast attachment protein D (hfaD) from Caulobacter vibrioides (strain ATCC 19089 / CIP 103742 / CB 15) (Caulobacter crescentus).